The primary structure comprises 431 residues: MANIINVIGREIMDSRGNPTVEAEVHLAGGFIGMAAAPSGASTGSREALELRDGDKSRYLGKGVLNAVANINGVIKAALMGKDAAAQAELDQIMIDLDGTENKDKLGANAILAVSLAAAKAAAMSKGIPLYAHIAELNGTPGVYSMPVPMMNIINGGEHADNNVDIQEFMVQPVGAKNFREALRMGAEIFHSLKKVLQSKGLSTAVGDEGGFAPNLASNAEALAVIKVAVEEAGYKLGTDVTLALDCAATEFYKDGKYDLAGEGKVFDSNGFSDFLKSLADQYPIVSIEDGLDESDWEGWAYQTKIMGDKIQLVGDDLFVTNTKILTRGIENNIANSILIKFNQIGSLTETLAAIRMAKEAGYTAVISHRSGETEDSTIADLAVGTAAGQIKTGSLCRSDRVAKYNQLLRIEEQLGEKAPYRGLKEIKGQA.

(2R)-2-phosphoglycerate is bound at residue Gln167. Catalysis depends on Glu209, which acts as the Proton donor. Positions 246, 289, and 316 each coordinate Mg(2+). 4 residues coordinate (2R)-2-phosphoglycerate: Lys341, Arg370, Ser371, and Lys392. Lys341 functions as the Proton acceptor in the catalytic mechanism.

This sequence belongs to the enolase family. In terms of assembly, component of the RNA degradosome, a multiprotein complex involved in RNA processing and mRNA degradation. It depends on Mg(2+) as a cofactor.

It is found in the cytoplasm. Its subcellular location is the secreted. It localises to the cell surface. The enzyme catalyses (2R)-2-phosphoglycerate = phosphoenolpyruvate + H2O. The protein operates within carbohydrate degradation; glycolysis; pyruvate from D-glyceraldehyde 3-phosphate: step 4/5. Functionally, catalyzes the reversible conversion of 2-phosphoglycerate (2-PG) into phosphoenolpyruvate (PEP). It is essential for the degradation of carbohydrates via glycolysis. This Shewanella denitrificans (strain OS217 / ATCC BAA-1090 / DSM 15013) protein is Enolase.